A 169-amino-acid polypeptide reads, in one-letter code: Ecotin (169 aa).

An N-terminal signal peptide occupies residues 1 to 21; it reads MKKCSIILASVLLATSINAIA. The cysteines at positions 76 and 113 are disulfide-linked.

The protein belongs to the protease inhibitor I11 (ecotin) family. Homodimer.

Its subcellular location is the periplasm. In terms of biological role, general inhibitor of pancreatic serine proteases: inhibits chymotrypsin, trypsin, elastases, factor X, kallikrein as well as a variety of other proteases. The chain is Ecotin from Yersinia pseudotuberculosis serotype O:1b (strain IP 31758).